Consider the following 1444-residue polypeptide: DNA polymerase III PolC-type (1444 aa).

The segment at 196-218 (EAVQVMQKRQAEGQNGNSSAAPL) is disordered. Positions 207 to 216 (EGQNGNSSAA) are enriched in polar residues. The region spanning 428–584 (YCVFDVETTG…FDAEATAYLA (157 aa)) is the Exonuclease domain.

The protein belongs to the DNA polymerase type-C family. PolC subfamily.

It localises to the cytoplasm. The enzyme catalyses DNA(n) + a 2'-deoxyribonucleoside 5'-triphosphate = DNA(n+1) + diphosphate. Required for replicative DNA synthesis. This DNA polymerase also exhibits 3' to 5' exonuclease activity. This chain is DNA polymerase III PolC-type, found in Listeria welshimeri serovar 6b (strain ATCC 35897 / DSM 20650 / CCUG 15529 / CIP 8149 / NCTC 11857 / SLCC 5334 / V8).